We begin with the raw amino-acid sequence, 315 residues long: tRNA dimethylallyltransferase (315 aa).

10–17 contacts ATP; sequence GPTAVGKT. A substrate-binding site is contributed by 12–17; sequence TAVGKT. Residues 35–38 form an interaction with substrate tRNA region; it reads DSMQ.

It belongs to the IPP transferase family. In terms of assembly, monomer. Mg(2+) is required as a cofactor.

It catalyses the reaction adenosine(37) in tRNA + dimethylallyl diphosphate = N(6)-dimethylallyladenosine(37) in tRNA + diphosphate. Functionally, catalyzes the transfer of a dimethylallyl group onto the adenine at position 37 in tRNAs that read codons beginning with uridine, leading to the formation of N6-(dimethylallyl)adenosine (i(6)A). The polypeptide is tRNA dimethylallyltransferase (Geobacillus kaustophilus (strain HTA426)).